The chain runs to 514 residues: Ribonuclease Y (514 aa).

The chain crosses the membrane as a helical span at residues 3-23 (VLWMVLGLAIGIAVGAAAGYI). One can recognise a KH domain in the interval 203-266 (TVKAVELPSD…EVARIAMERL (64 aa)). In terms of domain architecture, HD spans 330-423 (VLAHSVEVAN…VATADAVSAA (94 aa)).

The protein belongs to the RNase Y family.

The protein localises to the cell membrane. Endoribonuclease that initiates mRNA decay. This Rubrobacter xylanophilus (strain DSM 9941 / JCM 11954 / NBRC 16129 / PRD-1) protein is Ribonuclease Y.